Consider the following 778-residue polypeptide: Gelsolin (778 aa).

An N-terminal signal peptide occupies residues 1–23; that stretch reads MGKQGFGYIFLTIFCTMALKLNC. The segment at 49–172 is actin-severing; sequence MVEHAEFSKA…YKAGGVASGF (124 aa). The Gelsolin-like 1 repeat unit spans residues 72–154; that stretch reads FDLVPVPKNL…VQGHESSTFL (83 aa). The Ca(2+) site is built by G88, D89, E120, D132, G137, and A139. Residues 119–122 form an actin-actin interfilament contact point region; the sequence is DERG. 158-165 is an a 1,2-diacyl-sn-glycero-3-phospho-(1D-myo-inositol-4,5-bisphosphate) binding site; sequence KSGIKYKA. Residue V168 coordinates Ca(2+). Residue 184–192 participates in a 1,2-diacyl-sn-glycero-3-phospho-(1D-myo-inositol-4,5-bisphosphate) binding; that stretch reads RLLQVKGRR. One copy of the Gelsolin-like 2 repeat lies at 193–266; the sequence is TVRATEVPVS…SEEGAEREEM (74 aa). G209 and D210 together coordinate Ca(2+). A disulfide bridge links C211 with C224. Residues E232, D282, E325, D326, E350, G467, D468, E498, D510, G515, P517, T547, N587, D588, E610, D692, D693, and E715 each contribute to the Ca(2+) site. Gelsolin-like repeat units lie at residues 313–385 and 451–532; these read DENP…TPLF and SEKV…PHLM. Residues 430–778 are actin-binding, Ca-sensitive; the sequence is AAQHGMEDDG…LQRAMADVDV (349 aa). Gelsolin-like repeat units follow at residues 574–638 and 677–752; these read AVEL…DNFW and IEEV…PPTF.

The protein belongs to the villin/gelsolin family. In terms of assembly, binds to actin and to fibronectin. Highly expressed in homogene cells of the basilar papilla. Also detected in subcutaneous layer of the skin.

It localises to the secreted. It is found in the cytoplasm. The protein resides in the cytoskeleton. Calcium-regulated, actin-modulating protein that binds to the plus (or barbed) ends of actin monomers or filaments, preventing monomer exchange (end-blocking or capping). It can promote the assembly of monomers into filaments (nucleation) as well as sever filaments already formed. Plays a role in ciliogenesis. This chain is Gelsolin (GSN), found in Gallus gallus (Chicken).